The chain runs to 179 residues: Probable chemoreceptor glutamine deamidase CheD 2 (179 aa).

The protein belongs to the CheD family.

The enzyme catalyses L-glutaminyl-[protein] + H2O = L-glutamyl-[protein] + NH4(+). Its function is as follows. Probably deamidates glutamine residues to glutamate on methyl-accepting chemotaxis receptors (MCPs), playing an important role in chemotaxis. This Ruegeria sp. (strain TM1040) (Silicibacter sp.) protein is Probable chemoreceptor glutamine deamidase CheD 2.